An 862-amino-acid chain; its full sequence is Protein translocase subunit SecA (862 aa).

Residues Q88, 106 to 110 (GEGKT), and D506 each bind ATP. Positions 839, 841, 850, and 851 each coordinate Zn(2+).

The protein belongs to the SecA family. Monomer and homodimer. Part of the essential Sec protein translocation apparatus which comprises SecA, SecYEG and auxiliary proteins SecDF-YajC and YidC. The cofactor is Zn(2+).

Its subcellular location is the cell inner membrane. The protein resides in the cytoplasm. It catalyses the reaction ATP + H2O + cellular proteinSide 1 = ADP + phosphate + cellular proteinSide 2.. In terms of biological role, part of the Sec protein translocase complex. Interacts with the SecYEG preprotein conducting channel. Has a central role in coupling the hydrolysis of ATP to the transfer of proteins into and across the cell membrane, serving as an ATP-driven molecular motor driving the stepwise translocation of polypeptide chains across the membrane. The chain is Protein translocase subunit SecA from Campylobacter jejuni (strain RM1221).